We begin with the raw amino-acid sequence, 1434 residues long: DNA-directed RNA polymerase subunit beta (1434 aa).

It belongs to the RNA polymerase beta chain family. The RNAP catalytic core consists of 2 alpha, 1 beta, 1 beta' and 1 omega subunit. When a sigma factor is associated with the core the holoenzyme is formed, which can initiate transcription.

It carries out the reaction RNA(n) + a ribonucleoside 5'-triphosphate = RNA(n+1) + diphosphate. Its function is as follows. DNA-dependent RNA polymerase catalyzes the transcription of DNA into RNA using the four ribonucleoside triphosphates as substrates. The polypeptide is DNA-directed RNA polymerase subunit beta (Ureaplasma parvum serovar 3 (strain ATCC 27815 / 27 / NCTC 11736)).